The chain runs to 251 residues: DNA repair protein RecO (251 aa).

The protein belongs to the RecO family.

Functionally, involved in DNA repair and RecF pathway recombination. The sequence is that of DNA repair protein RecO from Acidiphilium cryptum (strain JF-5).